A 788-amino-acid polypeptide reads, in one-letter code: Protein FAR1-RELATED SEQUENCE 5 (788 aa).

An FAR1 domain is found at 87-179 (AFYNSYARRI…VKDHNHELVP (93 aa)). The region spanning 299–395 (TVTFDTTYRS…CKWHILKKCQ (97 aa)) is the MULE domain. The segment at 584–616 (FNVLEMRANCSCQMFEFSGIICRHILAVFRVTN) adopts an SWIM-type zinc-finger fold. Positions 713–733 (SSVTGGKHQQEVLAQPEPEDE) are disordered. The stretch at 731-768 (EDEMDKKINQLRNELELANRKCEAYRTNLLSVLKEMED) forms a coiled coil.

The protein belongs to the FHY3/FAR1 family. In terms of tissue distribution, expressed in hypocotyls, rosette and cauline leaves, inflorescences stems, flowers and siliques.

The protein resides in the nucleus. Functionally, putative transcription activator involved in regulating light control of development. In Arabidopsis thaliana (Mouse-ear cress), this protein is Protein FAR1-RELATED SEQUENCE 5 (FRS5).